Here is a 349-residue protein sequence, read N- to C-terminus: Homeobox-leucine zipper protein HOX7 (349 aa).

The interval 42–186 (RATRRDEQDD…PKQKSDLANR (145 aa)) is disordered. Composition is skewed to polar residues over residues 89-99 (SAETGSANSEM) and 121-135 (SSPS…RQQV). A DNA-binding region (homeobox) is located at residues 150–209 (GARKKLRLSKEQSSFLEDSFKEHSTLTPKQKSDLANRLNLRPRQVEVWFQNRRARTKLKQ). Residues 167-183 (DSFKEHSTLTPKQKSDL) show a composition bias toward basic and acidic residues. The leucine-zipper stretch occupies residues 208–252 (KQTEVDCEHLKRCCERLTRENRRLQREVAELRGALRTTTSSYPPL).

The protein belongs to the HD-ZIP homeobox family. Class II subfamily. In terms of assembly, homodimer. May form a heterodimer with HOX1, HOX2 or HOX3. Expressed in seedlings, roots, leaves, nodes, internodes, flowers and embryo.

Its subcellular location is the nucleus. Its function is as follows. Probable transcription factor that binds to the DNA sequence 5'-CAAT[GC]ATTG-3'. This Oryza sativa subsp. indica (Rice) protein is Homeobox-leucine zipper protein HOX7 (HOX7).